A 1574-amino-acid chain; its full sequence is Sterol 3-beta-glucosyltransferase (1574 aa).

A compositionally biased stretch (polar residues) spans 37-48 (TFLNQNPASPNN). Disordered stretches follow at residues 37–61 (TFLNQNPASPNNEEVPGNNEANKDE) and 102–170 (ASNA…HSKL). Basic and acidic residues-rich tracts occupy residues 107–121 (EAKDSKLNDNLRSSR) and 128–138 (PEYRREYKLDY). The segment covering 139–148 (DIDESEEDDI) has biased composition (acidic residues). Positions 149–170 (ESTRDENTLKPKTEDTSVHSKL) are enriched in basic and acidic residues. The GRAM 1 domain occupies 253–288 (DKLKRVFELNDDDYFYGNYNVWLVRDVLLQGHIYLT). A PH domain is found at 323–471 (DVIQSGSLGM…WVNNIVKVVF (149 aa)). 4 disordered regions span residues 389–413 (GRNDNASPRPDLHRNDSQEVSSGDE), 538–559 (RMKKELKNKTKKKMKKNSGNEP), 651–722 (ASHR…PVQG), and 774–806 (DALSPQIKSPQPLEAGPLNLTDPSEYEDNKKKN). A compositionally biased stretch (polar residues) spans 692 to 701 (ITPSKIFSNK). Residues 702–711 (SRTESEKSTP) are compositionally biased toward basic and acidic residues. Over residues 712–722 (DRSQTTSPVQG) the composition is skewed to polar residues. In terms of domain architecture, GRAM 2 spans 854 to 920 (RHFQERFSFN…IDVDTCSKEK (67 aa)). A compositionally biased stretch (basic and acidic residues) spans 964-976 (RESGNESSDDNKS). The interval 964-996 (RESGNESSDDNKSAQHGKSGCFQKTPSSAETTK) is disordered. The segment covering 985–996 (FQKTPSSAETTK) has biased composition (polar residues). UDP-alpha-D-glucose contacts are provided by S1057, R1058, D1060, N1333, I1364, H1366, H1379, S1382, G1383, T1384, D1403, and Q1404. Residues 1505 to 1574 (DSDTYDADHD…DNTTVTDANK (70 aa)) form a disordered region. Over residues 1510–1533 (DADHDSDKESDHDQTYEQDNHSDY) the composition is skewed to basic and acidic residues. The span at 1563–1574 (GNDNTTVTDANK) shows a compositional bias: polar residues.

Belongs to the glycosyltransferase 28 family.

It is found in the cytoplasm. The protein resides in the membrane. It catalyses the reaction a sterol + UDP-alpha-D-glucose = a sterol 3-beta-D-glucoside + UDP + H(+). The enzyme catalyses ergosterol + UDP-alpha-D-glucose = ergosteryl 3-beta-D-glucoside + UDP + H(+). Sterol glycosyltransferase responsible for the glycosylation of ergosterol to form ergosterol-glucoside. The protein is Sterol 3-beta-glucosyltransferase of Debaryomyces hansenii (strain ATCC 36239 / CBS 767 / BCRC 21394 / JCM 1990 / NBRC 0083 / IGC 2968) (Yeast).